The chain runs to 288 residues: Oxaloacetate decarboxylase (288 aa).

Substrate is bound at residue S47. Mg(2+) is bound at residue D85. 2 residues coordinate substrate: R156 and H232.

It belongs to the isocitrate lyase/PEP mutase superfamily. Oxaloacetate decarboxylase family. Homotetramer; dimer of dimers. Requires Mg(2+) as cofactor.

It carries out the reaction oxaloacetate + H(+) = pyruvate + CO2. Catalyzes the decarboxylation of oxaloacetate into pyruvate. Seems to play a role in maintaining cellular concentrations of bicarbonate and pyruvate. The polypeptide is Oxaloacetate decarboxylase (Rhodopseudomonas palustris (strain BisB18)).